The following is a 631-amino-acid chain: 1-deoxy-D-xylulose-5-phosphate synthase (631 aa).

Thiamine diphosphate is bound by residues His87 and Gly128–Ser130. Residue Asp159 participates in Mg(2+) binding. Residues Gly160 to Ala161, Asn188, Phe295, and Glu377 each bind thiamine diphosphate. Residue Asn188 coordinates Mg(2+).

The protein belongs to the transketolase family. DXPS subfamily. Homodimer. The cofactor is Mg(2+). Thiamine diphosphate serves as cofactor.

The enzyme catalyses D-glyceraldehyde 3-phosphate + pyruvate + H(+) = 1-deoxy-D-xylulose 5-phosphate + CO2. It participates in metabolic intermediate biosynthesis; 1-deoxy-D-xylulose 5-phosphate biosynthesis; 1-deoxy-D-xylulose 5-phosphate from D-glyceraldehyde 3-phosphate and pyruvate: step 1/1. Its function is as follows. Catalyzes the acyloin condensation reaction between C atoms 2 and 3 of pyruvate and glyceraldehyde 3-phosphate to yield 1-deoxy-D-xylulose-5-phosphate (DXP). The protein is 1-deoxy-D-xylulose-5-phosphate synthase of Pseudomonas putida (strain W619).